A 509-amino-acid polypeptide reads, in one-letter code: Probable Xaa-Pro aminopeptidase MAC_04092 (509 aa).

4 residues coordinate Mn(2+): aspartate 273, aspartate 284, glutamate 437, and glutamate 478.

This sequence belongs to the peptidase M24B family. The cofactor is Mn(2+).

It carries out the reaction Release of any N-terminal amino acid, including proline, that is linked to proline, even from a dipeptide or tripeptide.. Catalyzes the removal of a penultimate prolyl residue from the N-termini of peptides. The chain is Probable Xaa-Pro aminopeptidase MAC_04092 from Metarhizium acridum (strain CQMa 102).